A 324-amino-acid polypeptide reads, in one-letter code: Beta-ketoacyl-[acyl-carrier-protein] synthase III (324 aa).

Active-site residues include C114 and H246. The tract at residues 247-251 (QANLR) is ACP-binding. The active site involves N276.

It belongs to the thiolase-like superfamily. FabH family. In terms of assembly, homodimer.

The protein resides in the cytoplasm. It carries out the reaction malonyl-[ACP] + acetyl-CoA + H(+) = 3-oxobutanoyl-[ACP] + CO2 + CoA. It functions in the pathway lipid metabolism; fatty acid biosynthesis. Functionally, catalyzes the condensation reaction of fatty acid synthesis by the addition to an acyl acceptor of two carbons from malonyl-ACP. Catalyzes the first condensation reaction which initiates fatty acid synthesis and may therefore play a role in governing the total rate of fatty acid production. Possesses both acetoacetyl-ACP synthase and acetyl transacylase activities. Its substrate specificity determines the biosynthesis of branched-chain and/or straight-chain of fatty acids. This Campylobacter jejuni (strain RM1221) protein is Beta-ketoacyl-[acyl-carrier-protein] synthase III.